The primary structure comprises 126 residues: Protein Wnt-7(II) (126 aa).

Ser1 is lipidated: O-palmitoleoyl serine; by PORCN. An intrachain disulfide couples Cys92 to Cys107. A glycan (N-linked (GlcNAc...) asparagine) is linked at Asn93.

Belongs to the Wnt family. Post-translationally, palmitoleoylation is required for efficient binding to frizzled receptors. Depalmitoleoylation leads to Wnt signaling pathway inhibition.

The protein localises to the secreted. It localises to the extracellular space. The protein resides in the extracellular matrix. Ligand for members of the frizzled family of seven transmembrane receptors. Probable developmental protein. May be a signaling molecule which affects the development of discrete regions of tissues. Is likely to signal over only few cell diameters. The polypeptide is Protein Wnt-7(II) (WNT-7(II)) (Eptatretus stoutii (Pacific hagfish)).